Reading from the N-terminus, the 994-residue chain is Chloride channel protein 1 (994 aa).

Residues Met1–Trp118 lie on the Cytoplasmic side of the membrane. A helical membrane pass occupies residues Ile119–Tyr150. Residues Ala151–Pro158 are Extracellular-facing. Residues Leu159–Cys179 traverse the membrane as a helical segment. Over Gln180–Ser183 the chain is Cytoplasmic. An intramembrane region (note=Loop between two helices) is located at residues Pro184–Ser189. The Selectivity filter part_1 signature appears at Gly188 to Pro192. A chloride-binding site is contributed by Ser189. The helical intramembrane region spans Gly190–Lys195. Residues Thr196–Thr208 lie on the Cytoplasmic side of the membrane. Positions Leu209–Gly224 form an intramembrane region, helical. Positions Ser225 to Gly230 form an intramembrane region, note=Loop between two helices. A Selectivity filter part_2 motif is present at residues Gly230–Pro234. The helical intramembrane region spans Lys231–Leu246. At Ser247–Thr268 the chain is on the cytoplasmic side. 2 intramembrane regions (helical) span residues Val269 to Gly280 and Thr281 to Ile290. The Cytoplasmic portion of the chain corresponds to Glu291 to Asn301. The chain crosses the membrane as a helical span at residues Tyr302–Val321. The Extracellular portion of the chain corresponds to Trp322–Glu347. Residues Leu348–Val376 traverse the membrane as a helical segment. Residues Arg377–Arg390 are Cytoplasmic-facing. A helical membrane pass occupies residues Leu391 to Pro408. The Extracellular segment spans residues Gly409–Met414. Positions Ala415–Leu418 form an intramembrane region, note=Loop between two helices. The segment at residues Met419–Thr426 is an intramembrane region (helical). At Leu427 to Ile457 the chain is on the extracellular side. The segment at residues Ile458–Thr475 is an intramembrane region (helical). The note=Loop between two helices intramembrane region spans Thr476–Gly482. A Selectivity filter part_3 motif is present at residues Gly482–Pro486. The helical intramembrane region spans Gly483–Val498. Residue Phe484 participates in chloride binding. Over Gly499–Pro521 the chain is Extracellular. Residues Gly522–His538 constitute an intramembrane region (helical). The note=Loop between two helices intramembrane region spans Thr539–Val540. The segment at residues Ser541 to Ala554 is an intramembrane region (helical). Residues His555–Leu557 are Extracellular-facing. An intramembrane region (helical) is located at residues Pro558–Gln571. An intramembrane region (note=Loop between two helices) is located at residues Ser572–Pro575. Residues Ser576–Tyr578 constitute an intramembrane region (helical). Tyr578 lines the chloride pocket. Residues Asp579 to Leu994 lie on the Cytoplasmic side of the membrane. The 60-residue stretch at Met609–Glu668 folds into the CBS 1 domain. The interval Glu710 to Arg770 is disordered. Over residues Thr725–Gln739 the composition is skewed to pro residues. Positions Ile827–Ser882 constitute a CBS 2 domain. Disordered stretches follow at residues Leu886–Glu954 and Glu971–Leu994. Ser892 carries the post-translational modification Phosphoserine. Pro residues predominate over residues Pro933–Glu943. A compositionally biased stretch (acidic residues) spans Asp985–Leu994.

It belongs to the chloride channel (TC 2.A.49) family. ClC-1/CLCN1 subfamily. As to quaternary structure, homodimer. Predominantly expressed in skeletal muscles.

The protein localises to the cell membrane. The protein resides in the sarcolemma. Its subcellular location is the T-tubule. It carries out the reaction chloride(in) = chloride(out). The catalysed reaction is thiocyanate(in) = thiocyanate(out). The enzyme catalyses bromide(in) = bromide(out). It catalyses the reaction nitrate(in) = nitrate(out). It carries out the reaction iodide(out) = iodide(in). Its activity is regulated as follows. Modulated by membrane voltage with depolarization favouring channel opening and hyperpolarization favouring channel closure. Inhibited by acidic pH and ATP binding due to a shift of voltage dependence of common gating to more positive voltages. Inhibited by 9-anthracene-carboxylic. Its function is as follows. Voltage-gated chloride channel involved in skeletal muscle excitability. Generates most of the plasma membrane chloride conductance in skeletal muscle fibers, stabilizes the resting membrane potential and contributes to the repolarization phase during action potential firing. Forms a homodimeric channel where each subunit has its own ion conduction pathway. Conducts double-barreled currents controlled by two types of gates, two fast glutamate gates that control each subunit independently and a slow common gate that opens and shuts off both subunits simultaneously. Has a significant open probability at muscle resting potential and is further activated upon membrane depolarization. Permeable to small monovalent anions with ion selectivity for chloride &gt; thiocyanate &gt; bromide &gt; nitrate &gt; iodide. In Mus musculus (Mouse), this protein is Chloride channel protein 1 (Clcn1).